Here is a 213-residue protein sequence, read N- to C-terminus: Imidazole glycerol phosphate synthase subunit HisH (213 aa).

Residues 3–213 (MIGVIDYGMG…VGIVTGRENG (211 aa)) enclose the Glutamine amidotransferase type-1 domain. The active-site Nucleophile is the cysteine 81. Catalysis depends on residues histidine 188 and glutamate 190.

In terms of assembly, heterodimer of HisH and HisF.

Its subcellular location is the cytoplasm. The catalysed reaction is 5-[(5-phospho-1-deoxy-D-ribulos-1-ylimino)methylamino]-1-(5-phospho-beta-D-ribosyl)imidazole-4-carboxamide + L-glutamine = D-erythro-1-(imidazol-4-yl)glycerol 3-phosphate + 5-amino-1-(5-phospho-beta-D-ribosyl)imidazole-4-carboxamide + L-glutamate + H(+). It catalyses the reaction L-glutamine + H2O = L-glutamate + NH4(+). It functions in the pathway amino-acid biosynthesis; L-histidine biosynthesis; L-histidine from 5-phospho-alpha-D-ribose 1-diphosphate: step 5/9. Its function is as follows. IGPS catalyzes the conversion of PRFAR and glutamine to IGP, AICAR and glutamate. The HisH subunit catalyzes the hydrolysis of glutamine to glutamate and ammonia as part of the synthesis of IGP and AICAR. The resulting ammonia molecule is channeled to the active site of HisF. In Geobacillus thermodenitrificans (strain NG80-2), this protein is Imidazole glycerol phosphate synthase subunit HisH.